The following is a 222-amino-acid chain: MARLNINPTRMEMTRLKKLLKTATRGHKLLKDKLDELMKQFLEIVRENKRLREEAENALDTAYKNFIIARAVMSQEYLGSALMMPKQSVSVDVSTRNIMSVDVPVFDFKTENNQSDIYPYGLAFTSGELDSAMEAFSDAMQPLLRLAESEKSAQLLAQEIEKTRRRVNALENVMIPNYIETIKYIAMKLEENERASTTRLMKVKDMVLKKALEEKKKNDLVV.

The protein belongs to the V-ATPase D subunit family.

In terms of biological role, produces ATP from ADP in the presence of a proton gradient across the membrane. This Clostridioides difficile (strain 630) (Peptoclostridium difficile) protein is V-type ATP synthase subunit D.